We begin with the raw amino-acid sequence, 522 residues long: Peptide chain release factor 3 (522 aa).

The tr-type G domain occupies 9 to 276 (KKRRTFAIIS…SFVNLAPAPQ (268 aa)). Residues 18–25 (SHPDAGKT), 86–90 (DTPGH), and 140–143 (NKLD) each bind GTP.

Belongs to the TRAFAC class translation factor GTPase superfamily. Classic translation factor GTPase family. PrfC subfamily.

The protein resides in the cytoplasm. In terms of biological role, increases the formation of ribosomal termination complexes and stimulates activities of RF-1 and RF-2. It binds guanine nucleotides and has strong preference for UGA stop codons. It may interact directly with the ribosome. The stimulation of RF-1 and RF-2 is significantly reduced by GTP and GDP, but not by GMP. This is Peptide chain release factor 3 from Lactobacillus gasseri (strain ATCC 33323 / DSM 20243 / BCRC 14619 / CIP 102991 / JCM 1131 / KCTC 3163 / NCIMB 11718 / NCTC 13722 / AM63).